A 592-amino-acid chain; its full sequence is MRSHYCGDVNKSHVGQEVTLVGWVNRSRDLGGVVFLDLRDREGLIQVVYDPDLPEVFNVASTLRAEFCVQVKGLVRARPDSQVNGQMKTGEIEVLGQALTIINAADPLPLSMDNYQNNSEEQRLKYRYLDLRRPEMAQRLIFRAKVTSSVRRFLDSNGFLDIETPILTKATPEGARDYLVPSRTYKGQFFALPQSPQLFKQLLMMSGFDRYYQIVKCFRDEDLRADRQPEFTQIDIETSFMSSEQVMAKTEEMMRGLFLEMLNVDLGEFPRMTYNEAMRRFGSDKPDLRNPLELVDIADLLKEVEFAVFSGPANDEEGRVAALRIPGGAALSRKQIDDYTKFVGIYGAKGLAWMKINDLSLGLEGIQSPVLKFLNDSIVNEIVSRTGAQTGDIILFGADQATVVAESMGALRLKAGEDFSLLQGEWRPLWVVDFPMFEKINGNFHAVHHPFTAPRGVTAAELEANPANRVSDAYDMVLNGCELGGGSVRIHNQEMQSAVFRILGITDEEAKEKFGFLLEALRYGTPPHAGLAFGLDRIIMLMTGASSIRDVMAFPKTTTAACPLTNAPGFANPQQLAELGIAVVEKAVKTED.

Glu173 is a binding site for L-aspartate. Residues 197-200 form an aspartate region; the sequence is QLFK. Arg219 contacts L-aspartate. ATP is bound by residues 219-221 and Gln228; that span reads RDE. His448 provides a ligand contact to L-aspartate. ATP is bound at residue Glu482. Arg489 lines the L-aspartate pocket. ATP is bound at residue 534–537; it reads GLDR.

It belongs to the class-II aminoacyl-tRNA synthetase family. Type 1 subfamily. Homodimer.

Its subcellular location is the cytoplasm. The catalysed reaction is tRNA(Asp) + L-aspartate + ATP = L-aspartyl-tRNA(Asp) + AMP + diphosphate. Its function is as follows. Catalyzes the attachment of L-aspartate to tRNA(Asp) in a two-step reaction: L-aspartate is first activated by ATP to form Asp-AMP and then transferred to the acceptor end of tRNA(Asp). This Shewanella baltica (strain OS155 / ATCC BAA-1091) protein is Aspartate--tRNA ligase.